Reading from the N-terminus, the 139-residue chain is D-ribose pyranase (139 aa).

The Proton donor role is filled by His20. Residues Asp28, His106, and 128-130 each bind substrate; that span reads YAN.

This sequence belongs to the RbsD / FucU family. RbsD subfamily. Homodecamer.

The protein localises to the cytoplasm. It carries out the reaction beta-D-ribopyranose = beta-D-ribofuranose. The protein operates within carbohydrate metabolism; D-ribose degradation; D-ribose 5-phosphate from beta-D-ribopyranose: step 1/2. Functionally, catalyzes the interconversion of beta-pyran and beta-furan forms of D-ribose. This is D-ribose pyranase from Actinobacillus pleuropneumoniae serotype 5b (strain L20).